Consider the following 574-residue polypeptide: Urease subunit alpha (574 aa).

The Urease domain occupies 131–574; the sequence is GAIDSHIHFI…LPMAQRYLLL (444 aa). Residues histidine 136, histidine 138, and lysine 219 each contribute to the Ni(2+) site. Lysine 219 is modified (N6-carboxylysine). Histidine 221 provides a ligand contact to substrate. Histidine 248 and histidine 274 together coordinate Ni(2+). Histidine 322 functions as the Proton donor in the catalytic mechanism. A Ni(2+)-binding site is contributed by aspartate 362. Positions 384 to 403 are disordered; that stretch reads KVQRGPLPEDAANPRGSRND.

This sequence belongs to the metallo-dependent hydrolases superfamily. Urease alpha subunit family. As to quaternary structure, heterotrimer of UreA (gamma), UreB (beta) and UreC (alpha) subunits. Three heterotrimers associate to form the active enzyme. Requires Ni cation as cofactor. Carboxylation allows a single lysine to coordinate two nickel ions.

Its subcellular location is the cytoplasm. It carries out the reaction urea + 2 H2O + H(+) = hydrogencarbonate + 2 NH4(+). Its pathway is nitrogen metabolism; urea degradation; CO(2) and NH(3) from urea (urease route): step 1/1. The protein is Urease subunit alpha of Prochlorococcus marinus (strain MIT 9313).